Consider the following 454-residue polypeptide: F-box/WD repeat-containing protein 2 (454 aa).

An F-box domain is found at 54–101; sequence RDFLKLLPLELSFYLLKWLDPQTLLTCCLVSKQWNKVISACTEVWQTA. WD repeat units follow at residues 146-183, 185-221, 224-265, and 276-314; these read GHSA…CVYG, QTHT…RTQH, GHTG…NTLT, and LQQC…NCKC. N6-acetyllysine is present on Lys-298.

As to quaternary structure, directly interacts with SKP1 and CUL1.

Substrate-recognition component of the SCF (SKP1-CUL1-F-box protein)-type E3 ubiquitin ligase complex. This Rattus norvegicus (Rat) protein is F-box/WD repeat-containing protein 2.